Reading from the N-terminus, the 78-residue chain is U29-theraphotoxin-Cg1a (78 aa).

The signal sequence occupies residues 1–19 (MRYQTVFWILLIALCTVNP). 4 cysteine pairs are disulfide-bonded: C42–C56, C49–C60, C55–C77, and C67–C73.

Belongs to the neurotoxin 13 (insecticidal toxin ABC) family. 03 (JZTX-59) subfamily. As to expression, expressed by the venom gland.

It localises to the secreted. Functionally, probable ion channel inhibitor. This Chilobrachys guangxiensis (Chinese earth tiger tarantula) protein is U29-theraphotoxin-Cg1a.